A 492-amino-acid chain; its full sequence is Fascin-2 (492 aa).

Belongs to the fascin family. In terms of tissue distribution, localized specifically in the outer and inner segments of the photoreceptor cells in the retina.

The protein localises to the cytoplasm. The protein resides in the cytoskeleton. It is found in the cell projection. Its subcellular location is the stereocilium. Its function is as follows. Acts as an actin bundling protein. May play a pivotal role in photoreceptor cell-specific events, such as disk morphogenesis. This is Fascin-2 (FSCN2) from Homo sapiens (Human).